Here is a 336-residue protein sequence, read N- to C-terminus: Foldase protein PrsA (336 aa).

A signal peptide spans 1–22 (MKSAKKLLSVLCLGIFILTFTA). The N-palmitoyl cysteine moiety is linked to residue cysteine 23. Residue cysteine 23 is the site of S-diacylglycerol cysteine attachment. The 93-residue stretch at 194–286 (PNTMNVSHIL…FGYHIIKINS (93 aa)) folds into the PpiC domain.

The protein belongs to the PrsA family.

The protein localises to the cell membrane. The enzyme catalyses [protein]-peptidylproline (omega=180) = [protein]-peptidylproline (omega=0). Its function is as follows. Plays a major role in protein secretion by helping the post-translocational extracellular folding of several secreted proteins. This is Foldase protein PrsA from Clostridium botulinum (strain Okra / Type B1).